Consider the following 103-residue polypeptide: c-Myc-binding protein (103 aa).

The protein belongs to the AMY1 family. In terms of assembly, binds via its C-terminal region to the N-terminal region of MYC. Associates with AKAP1/S-AKAP84. Interacts with MYCBPAP. Interacts with CFAP91.

It is found in the cytoplasm. Its subcellular location is the nucleus. May control the transcriptional activity of MYC. Stimulates the activation of E box-dependent transcription by MYC. The sequence is that of c-Myc-binding protein (Mycbp) from Mus musculus (Mouse).